Here is a 334-residue protein sequence, read N- to C-terminus: D-alanine--D-alanine ligase (334 aa).

An ATP-grasp domain is found at 114–314 (KRIWRFEGLP…YEELCLRILA (201 aa)). Residue 140–195 (LEDLGSPMIVKPSREGSTIGLTKVTSPGQCEQAYRLASRYDPEVLCEQFIEGEETT) coordinates ATP. Residues Asp-267, Glu-281, and Asn-283 each contribute to the Mg(2+) site.

This sequence belongs to the D-alanine--D-alanine ligase family. Mg(2+) serves as cofactor. It depends on Mn(2+) as a cofactor.

The protein resides in the cytoplasm. It carries out the reaction 2 D-alanine + ATP = D-alanyl-D-alanine + ADP + phosphate + H(+). The protein operates within cell wall biogenesis; peptidoglycan biosynthesis. In terms of biological role, cell wall formation. This Paracidovorax citrulli (strain AAC00-1) (Acidovorax citrulli) protein is D-alanine--D-alanine ligase.